We begin with the raw amino-acid sequence, 465 residues long: tRNA modification GTPase MnmE (465 aa).

Residues Arg25, Glu87, and Arg126 each contribute to the (6S)-5-formyl-5,6,7,8-tetrahydrofolate site. Positions 222 to 386 (TIRVVLRGLP…LIERLVQFAE (165 aa)) constitute a TrmE-type G domain. GTP is bound by residues 232 to 237 (NAGKSR), 251 to 257 (TDQAGTT), and 276 to 279 (DTAG). Positions 236 and 257 each coordinate Mg(2+). Lys465 provides a ligand contact to (6S)-5-formyl-5,6,7,8-tetrahydrofolate.

It belongs to the TRAFAC class TrmE-Era-EngA-EngB-Septin-like GTPase superfamily. TrmE GTPase family. In terms of assembly, homodimer. Heterotetramer of two MnmE and two MnmG subunits. K(+) serves as cofactor.

The protein localises to the cytoplasm. Functionally, exhibits a very high intrinsic GTPase hydrolysis rate. Involved in the addition of a carboxymethylaminomethyl (cmnm) group at the wobble position (U34) of certain tRNAs, forming tRNA-cmnm(5)s(2)U34. This Rhodopirellula baltica (strain DSM 10527 / NCIMB 13988 / SH1) protein is tRNA modification GTPase MnmE.